Here is a 56-residue protein sequence, read N- to C-terminus: Large ribosomal subunit protein bL33 (56 aa).

The span at 1-12 (MATKGGREKIKL) shows a compositional bias: basic and acidic residues. The interval 1–28 (MATKGGREKIKLESTAGTGHFYTTSKNK) is disordered. A compositionally biased stretch (polar residues) spans 15–25 (TAGTGHFYTTS).

It belongs to the bacterial ribosomal protein bL33 family.

This is Large ribosomal subunit protein bL33 from Albidiferax ferrireducens (strain ATCC BAA-621 / DSM 15236 / T118) (Rhodoferax ferrireducens).